The sequence spans 193 residues: MRLTDIEIEQALDNGTIVIEPRPNNDAISGVSVDVRLGGQFRVFKDHTAPFIDLSGPSGEVQAALDRVMSEIIEIPDGEAFFLHPGELALAVTYESVTLPADIVGWLDGRSSLARLGLMVHVTAHRIDPGWQGKIVLEFYNSGKLPLALRPRMTIGALNFERLSGPVARPYNKRKNAKYKDQQDAVASRISQD.

Residues 110–115, D128, 136–138, Y171, K178, and Q182 each bind dCTP; these read RSSLAR and VLE. The Proton donor/acceptor role is filled by E138. The tract at residues 171 to 193 is disordered; sequence YNKRKNAKYKDQQDAVASRISQD.

Belongs to the dCTP deaminase family. Homotrimer.

It catalyses the reaction dCTP + H2O + H(+) = dUTP + NH4(+). The protein operates within pyrimidine metabolism; dUMP biosynthesis; dUMP from dCTP (dUTP route): step 1/2. Its function is as follows. Catalyzes the deamination of dCTP to dUTP. This Shewanella oneidensis (strain ATCC 700550 / JCM 31522 / CIP 106686 / LMG 19005 / NCIMB 14063 / MR-1) protein is dCTP deaminase.